Consider the following 337-residue polypeptide: Palmitoyltransferase ZDHHC15 (337 aa).

The Cytoplasmic segment spans residues 1–20; sequence MRRGWKMALSGGLRCCRRVL. A helical membrane pass occupies residues 21-41; the sequence is SWVPVLVIVLVVLWSYYAYVF. Residues 42–56 are Lumenal-facing; the sequence is ELCLVTVLSPAEKVI. A helical transmembrane segment spans residues 57 to 77; sequence YLILYHAIFVFFAWTYWKSIF. Over 78-172 the chain is Cytoplasmic; the sequence is TLPQQPNQKF…NNCIGFSNYK (95 aa). Positions 129-179 constitute a DHHC domain; the sequence is RFCDRCHLIKPDRCHHCSVCAMCVLKMDHHCPWVNNCIGFSNYKFFLQFLA. Zn(2+)-binding residues include C131, C134, H144, C145, C148, C151, and H158. C159 serves as the catalytic S-palmitoyl cysteine intermediate. C165 contributes to the Zn(2+) binding site. Residues 173–193 form a helical membrane-spanning segment; sequence FFLQFLAYSVLYCLYIATTVF. Topologically, residues 194–210 are lumenal; that stretch reads SYFIKYWRGELPSVRSK. Residues 211-234 form a helical membrane-spanning segment; sequence FHVLFLLFVACMFFVSLVILFGYH. Over 235–337 the chain is Cytoplasmic; that stretch reads CWLVSRNKTT…SSSLAVESET (103 aa). The tract at residues 293-337 is disordered; that stretch reads HSFPMRSMNESQNPLLANEEPWEDNEDDSRDYPEGSSSLAVESET. Positions 312 to 321 are enriched in acidic residues; it reads EPWEDNEDDS. Over residues 327 to 337 the composition is skewed to polar residues; sequence GSSSLAVESET.

This sequence belongs to the DHHC palmitoyltransferase family. Autopalmitoylated (in vitro). In terms of tissue distribution, expressed mainly in brain.

It is found in the golgi apparatus membrane. It localises to the postsynaptic density. The catalysed reaction is L-cysteinyl-[protein] + hexadecanoyl-CoA = S-hexadecanoyl-L-cysteinyl-[protein] + CoA. It carries out the reaction L-cysteinyl-[protein] + tetradecanoyl-CoA = S-tetradecanoyl-L-cysteinyl-[protein] + CoA. The enzyme catalyses L-cysteinyl-[protein] + octadecanoyl-CoA = S-octadecanoyl-L-cysteinyl-[protein] + CoA. Its activity is regulated as follows. Inhibited by 2-bromopalmitate. Palmitoyltransferase that catalyzes the addition of palmitate onto various protein substrates. Has no stringent fatty acid selectivity and in addition to palmitate can also transfer onto target proteins myristate from tetradecanoyl-CoA and stearate from octadecanoyl-CoA. Palmitoylates IGF2R and SORT1, promoting their partitioning to an endosomal membrane subdomain where they can interact with the retromer cargo-selective complex. Thereby, regulates retrograde transport from endosomes to the Golgi apparatus of these lysosomal sorting receptors and plays a role in trafficking of lysosomal proteins. In the nervous system, catalyzes the palmitoylation of DLG4/PSD95 and regulates its synaptic clustering and function in synaptogenesis. Could be involved in the differentiation of dopaminergic neurons and the development of the diencephalon. Could also catalyze the palmitoylation of GAP43. Could also palmitoylate DNAJC5 and regulate its localization to the Golgi membrane. Could also palmitoylate FYN as shown in vitro. May palmitoylate CALHM3 subunit of gustatory voltage-gated ion channels and modulate channel gating and kinetics. The sequence is that of Palmitoyltransferase ZDHHC15 from Mus musculus (Mouse).